The sequence spans 103 residues: Small ribosomal subunit protein cS23 (103 aa).

This sequence belongs to the chloroplast-specific ribosomal protein cS23 family. In terms of assembly, part of the 30S ribosomal subunit.

The protein resides in the plastid. It is found in the chloroplast. Functionally, probably a ribosomal protein or a ribosome-associated protein. The polypeptide is Small ribosomal subunit protein cS23 (ycf65) (Euglena granulata).